A 548-amino-acid polypeptide reads, in one-letter code: Chaperonin GroEL (548 aa).

ATP is bound by residues 30–33 (TLGP), lysine 51, 87–91 (DGTTT), glycine 415, 479–481 (NAA), and aspartate 495.

Belongs to the chaperonin (HSP60) family. Forms a cylinder of 14 subunits composed of two heptameric rings stacked back-to-back. Interacts with the co-chaperonin GroES.

It localises to the cytoplasm. It catalyses the reaction ATP + H2O + a folded polypeptide = ADP + phosphate + an unfolded polypeptide.. In terms of biological role, together with its co-chaperonin GroES, plays an essential role in assisting protein folding. The GroEL-GroES system forms a nano-cage that allows encapsulation of the non-native substrate proteins and provides a physical environment optimized to promote and accelerate protein folding. In Pectobacterium carotovorum subsp. carotovorum (strain PC1), this protein is Chaperonin GroEL.